Here is a 404-residue protein sequence, read N- to C-terminus: Sorting nexin-5 (404 aa).

N-acetylalanine is present on A2. One can recognise a PX domain in the interval 25–172 (LNVDPSLQID…HVFLEYDQDL (148 aa)). A 1,2-diacyl-sn-glycero-3-phospho-(1D-myo-inositol-4,5-bisphosphate) is bound by residues 40–46 (SERDKVK), 99–105 (FDGPREK), and 113–116 (EGSM). Positions 169–261 (DQDLSVRRKN…HSLALEEPTV (93 aa)) are interaction with DOCK1. The tract at residues 183-200 (FGGFFKSVVKSADEVLFS) is membrane-binding amphipathic helix. Position 193 is a phosphoserine (S193). A BAR domain is found at 202-404 (VKEVDDFFEQ…QSCIDLFKNN (203 aa)). K275 carries the post-translational modification N6-acetyllysine.

This sequence belongs to the sorting nexin family. As to quaternary structure, forms heterodimers with BAR domain-containing sorting nexins SNX1 and SNX2; does not homodimerize. The heterodimers are proposed to self-assemble into helical arrays on the membrane to stabilize and expand local membrane curvature underlying endosomal tubule formation. Thought to be a component of the originally described retromer complex (also called SNX-BAR retromer) which is a pentamer containing the heterotrimeric retromer cargo-selective complex (CSC), also described as vacuolar protein sorting subcomplex (VPS), and a heterodimeric membrane-deforming subcomplex formed between SNX1 or SNX2 and SNX5 or SNX6 (also called SNX-BAR subcomplex); the respective CSC and SNX-BAR subcomplexes associate with low affinity. Interacts with SNX1, SNX2, VPS26A, VPS29, VPS35, DCTN1, DOCK1, MIB1, PIP5K1C. Interacts with HGS; increased by PIP5K1C kinase activity and by PtdIns(3P) and/or PtdIns(3,4)P2.

The protein localises to the endosome. It is found in the early endosome. The protein resides in the early endosome membrane. Its subcellular location is the cell membrane. It localises to the cytoplasmic vesicle membrane. The protein localises to the cytoplasm. It is found in the cell projection. The protein resides in the phagocytic cup. Its subcellular location is the ruffle. Functionally, involved in several stages of intracellular trafficking. Interacts with membranes containing phosphatidylinositol lipids. Acts in part as component of the retromer membrane-deforming SNX-BAR subcomplex. The SNX-BAR retromer mediates retrograde transport of cargo proteins from endosomes to the trans-Golgi network (TGN) and is involved in endosome-to-plasma membrane transport for cargo protein recycling. The SNX-BAR subcomplex functions to deform the donor membrane into a tubular profile called endosome-to-TGN transport carrier (ETC). Does not have in vitro vesicle-to-membrane remodeling activity. Involved in retrograde transport of lysosomal enzyme receptor IGF2R. May function as link between endosomal transport vesicles and dynactin. Plays a role in the internalization of EGFR after EGF stimulation. Involved in EGFR endosomal sorting and degradation; the function involves PIP5K1C and is retromer-independent. Together with PIP5K1C facilitates HGS interaction with ubiquitinated EGFR, which initiates EGFR sorting to intraluminal vesicles (ILVs) of the multivesicular body for subsequent lysosomal degradation. Involved in E-cadherin sorting and degradation; inhibits PIP5K1C-mediated E-cadherin degradation. Plays a role in macropinocytosis. The sequence is that of Sorting nexin-5 (SNX5) from Bos taurus (Bovine).